A 250-amino-acid chain; its full sequence is Beta-lactamase HcpA (250 aa).

Residues 1–25 (MLGSVKKTLFGVLCLGALCLRGLMA) form the signal peptide. TPR repeat units follow at residues 29–62 (AKELVSLGIESVKKQDFAQAKAHFEKACELKEGF), 67–98 (LGAFYEEGKGVGKDLKKAIQFYTKGCELNDGY), 100–133 (CRLLGNLYYNGQGVSKDAKKASQYYSKSCELNHA), 134–169 (EGCTVLGSLHHYGVGTPKDLRKALDLYEKACDLKDS), and 170–202 (PGCINAGYMYGVAKNFKEAIVRYSKACELKDGR). 6 disulfide bridges follow: Cys-56–Cys-64, Cys-92–Cys-100, Cys-128–Cys-136, Cys-164–Cys-172, Cys-196–Cys-204, and Cys-232–Cys-240.

This sequence belongs to the hcp beta-lactamase family.

It is found in the secreted. The catalysed reaction is a beta-lactam + H2O = a substituted beta-amino acid. With respect to regulation, inhibited by cloxacillin and oxacillin but not by ACA derivatives or metal chelators. Its function is as follows. Slowly hydrolyzes 6-aminopenicillinic acid and 7-aminocephalosporanic acid (ACA) derivatives. May be involved in the synthesis of the cell wall peptidoglycan. The sequence is that of Beta-lactamase HcpA (hcpA) from Helicobacter pylori (strain J99 / ATCC 700824) (Campylobacter pylori J99).